A 249-amino-acid chain; its full sequence is NH(3)-dependent NAD(+) synthetase (249 aa).

Asp-34 is a Mg(2+) binding site. Arg-110 contacts deamido-NAD(+). Thr-130 provides a ligand contact to ATP. Residue Glu-135 coordinates Mg(2+). 2 residues coordinate deamido-NAD(+): Lys-143 and Asp-150. 2 residues coordinate ATP: Lys-159 and Ser-181. 232–233 contacts deamido-NAD(+); that stretch reads HK.

It belongs to the NAD synthetase family. In terms of assembly, homodimer.

The catalysed reaction is deamido-NAD(+) + NH4(+) + ATP = AMP + diphosphate + NAD(+) + H(+). It participates in cofactor biosynthesis; NAD(+) biosynthesis; NAD(+) from deamido-NAD(+) (ammonia route): step 1/1. In terms of biological role, catalyzes the ATP-dependent amidation of deamido-NAD to form NAD. Uses ammonia as a nitrogen source. In Picrophilus torridus (strain ATCC 700027 / DSM 9790 / JCM 10055 / NBRC 100828 / KAW 2/3), this protein is NH(3)-dependent NAD(+) synthetase.